The primary structure comprises 168 residues: MSVANSRTAVYPGTFDPITNGHIDLVNRAAPLFERVVVGVAYSPSKGPALSLERRVALAQEALAAHANVEVRGFDTLLAHFVREMGAGVLLRGLRAVSDFEYEFQMASMNRHLIPEVETLFLTPAEQYSFISSSLVREIARLGGDVSGFVPASVVEALRQVRQSRAQA.

T14 contributes to the substrate binding site. ATP contacts are provided by residues 14-15 (TF) and H22. K46, L78, and R92 together coordinate substrate. ATP is bound by residues 93-95 (GLR), E103, and 128-134 (YSFISSS).

Belongs to the bacterial CoaD family. In terms of assembly, homohexamer. Mg(2+) serves as cofactor.

The protein resides in the cytoplasm. The catalysed reaction is (R)-4'-phosphopantetheine + ATP + H(+) = 3'-dephospho-CoA + diphosphate. It functions in the pathway cofactor biosynthesis; coenzyme A biosynthesis; CoA from (R)-pantothenate: step 4/5. Its function is as follows. Reversibly transfers an adenylyl group from ATP to 4'-phosphopantetheine, yielding dephospho-CoA (dPCoA) and pyrophosphate. This Xanthomonas axonopodis pv. citri (strain 306) protein is Phosphopantetheine adenylyltransferase.